The sequence spans 1537 residues: Leucine-rich repeat-containing protein 7 (1537 aa).

LRR repeat units lie at residues 23–44 (IISV…VFNF), 47–68 (TLEE…LFNC), 70–91 (ALRK…IASL), 93–114 (NLKE…IKCC), 116–137 (CLTI…FTQL), 139–161 (NLTQ…GRLV), 162–183 (KLRI…MHKL), 185–206 (QLER…LDQI), 208–229 (NLRE…IGKL), 231–253 (MLVY…SGCE), 254–275 (ALED…IGLL), 277–298 (KLTT…IGNL), 300–321 (LLEE…IGYL), 323–344 (SLRT…IGSC), 346–367 (NVTV…IGQM), 369–391 (KLRV…TKLK), and 392–413 (ELAA…QTEA). Residues serine 439, serine 441, and serine 443 each carry the phosphoserine modification. The segment covering 663–676 (KKESTDESEVDKTH) has biased composition (basic and acidic residues). Disordered stretches follow at residues 663–709 (KKES…VGSL), 730–759 (FPQP…DRLP), 786–810 (AENA…RRPL), and 824–892 (EQST…SPGV). Over residues 677 to 709 (CLNNSVSSGTYSDYSPSQASSGSSNTRVKVGSL) the composition is skewed to polar residues. Residues 790–804 (NSNPLLSSKSRSTSS) show a composition bias toward low complexity. Residue threonine 831 is modified to Phosphothreonine. Serine 850 is subject to Phosphoserine. Low complexity predominate over residues 859–871 (PSKLETTPTTSPL). The residue at position 865 (threonine 865) is a Phosphothreonine. Serine 869 is modified (phosphoserine). Residues 872-882 (PERKEHIKEST) show a composition bias toward basic and acidic residues. A phosphoserine mark is found at serine 947, serine 949, and serine 1118. The tract at residues 1136 to 1159 (ELPPTDRYGRPPYRGGLDRQSSVT) is disordered. The residue at position 1149 (arginine 1149) is an Omega-N-methylarginine. A Phosphoserine modification is found at serine 1233. 2 disordered regions span residues 1234 to 1265 (DYNL…SCGK) and 1331 to 1360 (QKTP…YPLG). Over residues 1243 to 1263 (KPSDNSDLKTRPTPVKGEESC) the composition is skewed to basic and acidic residues. Polar residues predominate over residues 1332 to 1354 (KTPSQQSNILDNGQEDVSPSGQW). Residues serine 1335 and serine 1439 each carry the phosphoserine modification. One can recognise a PDZ domain in the interval 1445–1535 (EQFCVRIEKN…TVDLVIQREL (91 aa)).

It belongs to the LAP (LRR and PDZ) protein family. Interacts with CNKSR2 and DLG4. Interacts with CTNND2/Catenin delta-2. Forms a complex with N-cadherin through CTNND2. Interacts with CAMK2A. In terms of tissue distribution, brain-specific. Isoform 3 is ubiquitously expressed.

Its subcellular location is the cytoplasm. It localises to the postsynaptic density. Functionally, required for normal synaptic spine architecture and function. Necessary for DISC1 and GRM5 localization to postsynaptic density complexes and for both N-methyl D-aspartate receptor-dependent and metabotropic glutamate receptor-dependent long term depression. This is Leucine-rich repeat-containing protein 7 (LRRC7) from Homo sapiens (Human).